The chain runs to 82 residues: Cytochrome b559 subunit alpha (82 aa).

A helical transmembrane segment spans residues 21–35 (VIHSITIPALFIAGW). His23 serves as a coordination point for heme.

Belongs to the PsbE/PsbF family. As to quaternary structure, heterodimer of an alpha subunit and a beta subunit. PSII is composed of 1 copy each of membrane proteins PsbA, PsbB, PsbC, PsbD, PsbE, PsbF, PsbH, PsbI, PsbJ, PsbK, PsbL, PsbM, PsbT, PsbX, PsbY, PsbZ, Psb30/Ycf12, peripheral proteins PsbO, CyanoQ (PsbQ), PsbU, PsbV and a large number of cofactors. It forms dimeric complexes. The cofactor is heme b.

Its subcellular location is the cellular thylakoid membrane. Functionally, this b-type cytochrome is tightly associated with the reaction center of photosystem II (PSII). PSII is a light-driven water:plastoquinone oxidoreductase that uses light energy to abstract electrons from H(2)O, generating O(2) and a proton gradient subsequently used for ATP formation. It consists of a core antenna complex that captures photons, and an electron transfer chain that converts photonic excitation into a charge separation. In Nostoc sp. (strain PCC 7120 / SAG 25.82 / UTEX 2576), this protein is Cytochrome b559 subunit alpha.